The sequence spans 465 residues: Probable glycine dehydrogenase (decarboxylating) subunit 1 (465 aa).

The protein belongs to the GcvP family. N-terminal subunit subfamily. The glycine cleavage system is composed of four proteins: P, T, L and H. In this organism, the P 'protein' is a heterodimer of two subunits.

It catalyses the reaction N(6)-[(R)-lipoyl]-L-lysyl-[glycine-cleavage complex H protein] + glycine + H(+) = N(6)-[(R)-S(8)-aminomethyldihydrolipoyl]-L-lysyl-[glycine-cleavage complex H protein] + CO2. The glycine cleavage system catalyzes the degradation of glycine. The P protein binds the alpha-amino group of glycine through its pyridoxal phosphate cofactor; CO(2) is released and the remaining methylamine moiety is then transferred to the lipoamide cofactor of the H protein. The chain is Probable glycine dehydrogenase (decarboxylating) subunit 1 from Aeropyrum pernix (strain ATCC 700893 / DSM 11879 / JCM 9820 / NBRC 100138 / K1).